We begin with the raw amino-acid sequence, 260 residues long: Serine/threonine-protein acetyltransferase NGR_a02610 (260 aa).

Catalysis depends on residues His-123 and Glu-143. Position 123 (His-123) interacts with CoA. 180–181 (KS) is a CoA binding site. Cys-185 is an active-site residue.

The protein belongs to the acetyltransferase YopJ family.

The enzyme catalyses L-threonyl-[protein] + acetyl-CoA = O-acetyl-L-threonyl-[protein] + CoA. The catalysed reaction is L-seryl-[protein] + acetyl-CoA = O-acetyl-L-seryl-[protein] + CoA. Serine/threonine-protein acetyltransferase translocated into infected cells, which mediates acetylation of serine and threonine residues of host target proteins. The sequence is that of Serine/threonine-protein acetyltransferase NGR_a02610 from Sinorhizobium fredii (strain NBRC 101917 / NGR234).